We begin with the raw amino-acid sequence, 392 residues long: ATP phosphoribosyltransferase regulatory subunit (392 aa).

Belongs to the class-II aminoacyl-tRNA synthetase family. HisZ subfamily. Heteromultimer composed of HisG and HisZ subunits.

The protein localises to the cytoplasm. It functions in the pathway amino-acid biosynthesis; L-histidine biosynthesis; L-histidine from 5-phospho-alpha-D-ribose 1-diphosphate: step 1/9. In terms of biological role, required for the first step of histidine biosynthesis. May allow the feedback regulation of ATP phosphoribosyltransferase activity by histidine. The protein is ATP phosphoribosyltransferase regulatory subunit of Gloeobacter violaceus (strain ATCC 29082 / PCC 7421).